Consider the following 301-residue polypeptide: Securin (301 aa).

Disordered regions lie at residues Met-1–Leu-55, Asp-82–Leu-120, and Ala-218–His-284. Positions Arg-33–Leu-36 match the D-box 1 motif. The span at Ser-38–Val-50 shows a compositional bias: polar residues. A D-box 2 motif is present at residues Arg-52–Leu-55. Composition is skewed to polar residues over residues Glu-88–Ala-98, Pro-110–Pro-119, and Val-231–Tyr-245. 2 repeats span residues Ala-250–Ser-260 and Ala-270–Ser-280.

Belongs to the securin family. In terms of assembly, interacts with the caspase-like cut1, and prevents its protease activity probably by covering its active site. Post-translationally, ubiquitinated by the anaphase promoting complex (APC) at the onset of anaphase, conducting to its degradation.

The protein resides in the cytoplasm. It is found in the nucleus. In terms of biological role, regulatory protein, which plays a central role in chromosome stability. Probably acts by blocking the action of key proteins. During the mitosis, it blocks separase/cut1 function, preventing the proteolysis of the cohesin complex and the subsequent segregation of the chromosomes. At the onset of anaphase, it is ubiquitinated, conducting to its destruction and to the liberation of cut1. The sequence is that of Securin (cut2) from Schizosaccharomyces pombe (strain 972 / ATCC 24843) (Fission yeast).